A 727-amino-acid chain; its full sequence is Elongation factor 2 (727 aa).

In terms of domain architecture, tr-type G spans 19–260 (EQIRNMGICA…MSIKHLPNPL (242 aa)). Residues 28-35 (AHIDHGKT), 94-98 (DTPGH), and 148-151 (NKVD) contribute to the GTP site. Histidine 603 is subject to Diphthamide.

The protein belongs to the TRAFAC class translation factor GTPase superfamily. Classic translation factor GTPase family. EF-G/EF-2 subfamily.

The protein resides in the cytoplasm. Its function is as follows. Catalyzes the GTP-dependent ribosomal translocation step during translation elongation. During this step, the ribosome changes from the pre-translocational (PRE) to the post-translocational (POST) state as the newly formed A-site-bound peptidyl-tRNA and P-site-bound deacylated tRNA move to the P and E sites, respectively. Catalyzes the coordinated movement of the two tRNA molecules, the mRNA and conformational changes in the ribosome. The chain is Elongation factor 2 from Methanococcus maripaludis (strain DSM 14266 / JCM 13030 / NBRC 101832 / S2 / LL).